The following is a 340-amino-acid chain: uncharacterized protein (340 aa).

The 250-residue stretch at A58–R307 folds into the Radical SAM core domain. [4Fe-4S] cluster contacts are provided by C72, C76, and C79. Transmembrane regions (helical) follow at residues Y140–L160 and Q243–L263.

Requires [4Fe-4S] cluster as cofactor.

It is found in the cell membrane. This is an uncharacterized protein from Mycobacterium tuberculosis (strain CDC 1551 / Oshkosh).